Here is a 179-residue protein sequence, read N- to C-terminus: Interleukin-22 (179 aa).

The N-terminal stretch at 1 to 33 is a signal peptide; the sequence is MAVLQKSMSFSLMGTLAASCLLLIALWAQEANA. 2 disulfides stabilise this stretch: Cys40–Cys132 and Cys89–Cys178. N-linked (GlcNAc...) asparagine glycans are attached at residues Asn54, Asn68, and Asn97.

Belongs to the IL-10 family.

The protein resides in the secreted. In terms of biological role, cytokine that plays a critical role in modulating tissue responses during inflammation. Plays an essential role in the regeneration of epithelial cells to maintain barrier function after injury and for the prevention of further tissue damage. Unlike most of the cytokines, has no effect on immune cells. Signals through a heterodimeric receptor composed of two subunits, the specific receptor IL22RA1 which is present on non-immune cells in many organs and the shared subunit IL10RB. Ligation of IL22RA1 with IL22 induces activation of the tyrosine kinases JAK1 and TYK2, which in turn activates STAT3. In turn, promotes cell survival and proliferation through STAT3, ERK1/2 and PI3K/AKT pathways. Promotes phosphorylation of GSK3B at 'Ser-9' and CTTN. Promotes epithelial cell spreading. In Mus musculus (Mouse), this protein is Interleukin-22 (Il22).